Reading from the N-terminus, the 64-residue chain is DNA gyrase inhibitor YacG (64 aa).

Zn(2+) contacts are provided by Cys9, Cys12, Cys28, and Cys32. The segment at Lys45–Pro64 is disordered. Over residues Ser54–Pro64 the composition is skewed to acidic residues.

The protein belongs to the DNA gyrase inhibitor YacG family. Interacts with GyrB. Zn(2+) serves as cofactor.

Functionally, inhibits all the catalytic activities of DNA gyrase by preventing its interaction with DNA. Acts by binding directly to the C-terminal domain of GyrB, which probably disrupts DNA binding by the gyrase. The sequence is that of DNA gyrase inhibitor YacG from Klebsiella pneumoniae (strain 342).